Here is a 311-residue protein sequence, read N- to C-terminus: Class E basic helix-loop-helix protein 22 (311 aa).

The segment at 22-170 (AKRMESAFRS…GGSKKSKEQK (149 aa)) is disordered. Residues 81-96 (GESASRSSVAESSGGE) are compositionally biased toward low complexity. The segment covering 125–147 (AGGGGGGGGGGGGGPGGGGGGGL) has biased composition (gly residues). Residues 171-225 (ALRLNINARERRRMHDLNDALDELRAVIPYAHSPSVRKLSKIATLLLAKNYILMQ) enclose the bHLH domain.

It is found in the nucleus. In terms of biological role, may act as a transcriptional repressor. The chain is Class E basic helix-loop-helix protein 22 (BHLHE22) from Gallus gallus (Chicken).